The sequence spans 234 residues: 2,3,4,5-tetrahydropyridine-2,6-dicarboxylate N-acetyltransferase (234 aa).

It belongs to the transferase hexapeptide repeat family. DapH subfamily.

It carries out the reaction (S)-2,3,4,5-tetrahydrodipicolinate + acetyl-CoA + H2O = L-2-acetamido-6-oxoheptanedioate + CoA. It participates in amino-acid biosynthesis; L-lysine biosynthesis via DAP pathway; LL-2,6-diaminopimelate from (S)-tetrahydrodipicolinate (acetylase route): step 1/3. In terms of biological role, catalyzes the transfer of an acetyl group from acetyl-CoA to tetrahydrodipicolinate. This chain is 2,3,4,5-tetrahydropyridine-2,6-dicarboxylate N-acetyltransferase, found in Lacticaseibacillus paracasei (strain ATCC 334 / BCRC 17002 / CCUG 31169 / CIP 107868 / KCTC 3260 / NRRL B-441) (Lactobacillus paracasei).